The sequence spans 32 residues: Acatoxin 1 (32 aa).

3 cysteine pairs are disulfide-bonded: Cys1–Cys15, Cys8–Cys20, and Cys14–Cys26.

Its subcellular location is the secreted. The protein localises to the nematocyst. Reversibly inhibits acid-sensing ion channels (ASIC) in rat dorsal root ganglia neurons. Reversibly inhibits voltage-gated potassium channels (Kv) in rat DRG neurons. In Anthopleura cascaia (Sea anemone), this protein is Acatoxin 1.